Here is a 1342-residue protein sequence, read N- to C-terminus: DNA-directed RNA polymerase subunit beta (1342 aa).

The protein belongs to the RNA polymerase beta chain family. In terms of assembly, the RNAP catalytic core consists of 2 alpha, 1 beta, 1 beta' and 1 omega subunit. When a sigma factor is associated with the core the holoenzyme is formed, which can initiate transcription.

The catalysed reaction is RNA(n) + a ribonucleoside 5'-triphosphate = RNA(n+1) + diphosphate. DNA-dependent RNA polymerase catalyzes the transcription of DNA into RNA using the four ribonucleoside triphosphates as substrates. The polypeptide is DNA-directed RNA polymerase subunit beta (Pseudoalteromonas atlantica (strain T6c / ATCC BAA-1087)).